We begin with the raw amino-acid sequence, 352 residues long: Small ribosomal subunit biogenesis GTPase RsgA (352 aa).

The segment covering 1–21 (MKKNKLSKNQHRRIQAHHQYR) has biased composition (basic residues). The disordered stretch occupies residues 1–38 (MKKNKLSKNQHRRIQAHHQYRLHPTSLTDDKNNQLDDA). The 163-residue stretch at 116–278 (FYDGIKPMAA…LIDSPGIREF (163 aa)) folds into the CP-type G domain. GTP is bound by residues 164-167 (NKID) and 218-226 (GQSGVGKSS). Residues C302, C307, H309, and C315 each coordinate Zn(2+).

Belongs to the TRAFAC class YlqF/YawG GTPase family. RsgA subfamily. As to quaternary structure, monomer. Associates with 30S ribosomal subunit, binds 16S rRNA. Zn(2+) serves as cofactor.

The protein localises to the cytoplasm. Functionally, one of several proteins that assist in the late maturation steps of the functional core of the 30S ribosomal subunit. Helps release RbfA from mature subunits. May play a role in the assembly of ribosomal proteins into the subunit. Circularly permuted GTPase that catalyzes slow GTP hydrolysis, GTPase activity is stimulated by the 30S ribosomal subunit. In Hamiltonella defensa subsp. Acyrthosiphon pisum (strain 5AT), this protein is Small ribosomal subunit biogenesis GTPase RsgA.